A 323-amino-acid polypeptide reads, in one-letter code: C-type lectin domain family 11 member A (323 aa).

Residues 1-21 form the signal peptide; the sequence is MQAAWLLGALVVPQLLGFGHG. 2 disordered regions span residues 55 to 106 and 272 to 295; these read LGLP…TPED and LGAQ…TLEN. Residues 61–63 carry the Cell attachment site motif; the sequence is RGD. Positions 74–90 are enriched in acidic residues; it reads EDWEMEEDQGEEEEEEA. The region spanning 183–320 is the C-type lectin domain; the sequence is LGHKCFLLSR…CQRRLYYVCE (138 aa). Cystine bridges form between Cys204-Cys319 and Cys296-Cys311.

In terms of processing, O-glycosylated. Probably sulfated on the O-glycans. Expressed in skeletal tissues including bone marrow, chondrocytes, primary ossification center-associated cells, the perichondrium and periosteum. Lower levels of expression were detected in spleen, thymus, appendix and fetal liver.

The protein localises to the cytoplasm. It is found in the secreted. Promotes osteogenesis by stimulating the differentiation of mesenchymal progenitors into mature osteoblasts. Important for repair and maintenance of adult bone. In Homo sapiens (Human), this protein is C-type lectin domain family 11 member A (CLEC11A).